A 125-amino-acid chain; its full sequence is Desulfoferrodoxin (125 aa).

Fe cation is bound by residues histidine 49, histidine 69, histidine 75, cysteine 115, and histidine 118.

It belongs to the desulfoferrodoxin family. Cu(2+) is required as a cofactor.

The catalysed reaction is reduced [rubredoxin] + superoxide + 2 H(+) = oxidized [rubredoxin] + H2O2. Catalyzes the reduction of superoxide to hydrogen peroxide, using electrons from NADH and NADH:rubredoxin oxidoreductase (NROR) and rubredoxin (Rd) as electron transport intermediaries between NADH and Dfx. Is a key factor in the superoxide reductase dependent part of a pathway for detoxification of reactive oxygen species (ROS) in C.acetobutylicum, an obligate anaerobic bacterium. This is Desulfoferrodoxin (dfx) from Clostridium acetobutylicum (strain ATCC 824 / DSM 792 / JCM 1419 / IAM 19013 / LMG 5710 / NBRC 13948 / NRRL B-527 / VKM B-1787 / 2291 / W).